The following is a 225-amino-acid chain: Insulin-induced gene 2 protein (225 aa).

The Cytoplasmic portion of the chain corresponds to methionine 1–valine 28. The helical transmembrane segment at valine 29 to isoleucine 51 threads the bilayer. Residues glutamine 52–alanine 70 lie on the Lumenal side of the membrane. Residues tryptophan 71–tyrosine 88 form a helical membrane-spanning segment. The Cytoplasmic segment spans residues proline 89–arginine 103. The chain crosses the membrane as a helical span at residues glutamate 104 to aspartate 126. Residues phenylalanine 127–asparagine 129 are Lumenal-facing. The chain crosses the membrane as a helical span at residues asparagine 130–phenylalanine 148. The Cytoplasmic portion of the chain corresponds to aspartate 149–serine 153. Residue serine 151 is modified to Phosphoserine. A helical transmembrane segment spans residues glycine 154–asparagine 175. The Lumenal portion of the chain corresponds to glycine 176–arginine 189. A helical membrane pass occupies residues serine 190–glycine 207. Residues arginine 208–glutamate 225 are Cytoplasmic-facing. At cysteine 215 the chain carries Cysteine sulfenic acid (-SOH); alternate. Cysteine 215 is covalently cross-linked (Glycyl cysteine thioester (Cys-Gly) (interchain with G-Cter in ubiquitin); alternate). The KxHxx signature appears at alanine 219–glutamate 225.

Belongs to the INSIG family. As to quaternary structure, interacts with SCAP; interaction is direct and only takes place in the presence of sterols; it prevents interaction between SCAP and the coat protein complex II (COPII). Associates with the SCAP-SREBP complex (composed of SCAP and SREBF1/SREBP1 or SREBF2/SREBP2); association is mediated via its interaction with SCAP and only takes place in the presence of sterols. Interacts with RNF139. Interacts with RNF145. Post-translationally, phosphorylation at Ser-151 by PCK1 reduces binding to oxysterol, disrupting the interaction between INSIG2 and SCAP, thereby promoting nuclear translocation of SREBP proteins (SREBF1/SREBP1 or SREBF2/SREBP2) and subsequent transcription of downstream lipogenesis-related genes. Polyubiquitinated by AMFR/gp78 at Cys-215 in some tissues such as adipose tissues, undifferentiated myoblasts and liver, leading to its degradation. In differentiated myotubes, Cys-215 oxidation prevents ubiquitination at the same site, resulting in protein stabilization. In terms of processing, oxidized at Cys-215 in differentiated myotubes, preventing ubiquitination at the same site, and resulting in protein stabilization.

Its subcellular location is the endoplasmic reticulum membrane. In terms of biological role, oxysterol-binding protein that mediates feedback control of cholesterol synthesis by controlling both endoplasmic reticulum to Golgi transport of SCAP and degradation of HMGCR. Acts as a negative regulator of cholesterol biosynthesis by mediating the retention of the SCAP-SREBP complex in the endoplasmic reticulum, thereby blocking the processing of sterol regulatory element-binding proteins (SREBPs) SREBF1/SREBP1 and SREBF2/SREBP2. Binds oxysterol, including 22-hydroxycholesterol, 24-hydroxycholesterol, 25-hydroxycholesterol and 27-hydroxycholesterol, regulating interaction with SCAP and retention of the SCAP-SREBP complex in the endoplasmic reticulum. In presence of oxysterol, interacts with SCAP, retaining the SCAP-SREBP complex in the endoplasmic reticulum, thereby preventing SCAP from escorting SREBF1/SREBP1 and SREBF2/SREBP2 to the Golgi. Sterol deprivation or phosphorylation by PCK1 reduce oxysterol-binding, disrupting the interaction between INSIG2 and SCAP, thereby promoting Golgi transport of the SCAP-SREBP complex, followed by processing and nuclear translocation of SREBF1/SREBP1 and SREBF2/SREBP2. Also regulates cholesterol synthesis by regulating degradation of HMGCR: initiates the sterol-mediated ubiquitin-mediated endoplasmic reticulum-associated degradation (ERAD) of HMGCR via recruitment of the reductase to the ubiquitin ligase RNF139. The chain is Insulin-induced gene 2 protein from Rattus norvegicus (Rat).